The sequence spans 183 residues: Protein jagunal homolog 1 (183 aa).

The Cytoplasmic segment spans residues 1–39; that stretch reads MASRAGPRAAGTDGSDFQHRERVAMHYQMSVTLKYEIKK. The residue at position 3 (Ser3) is a Phosphoserine. A helical membrane pass occupies residues 40 to 60; it reads LIYVHLVIWLLLVAKMSVGHL. Over 61 to 71 the chain is Lumenal; that stretch reads RLLSHDQVAMP. The chain crosses the membrane as a helical span at residues 72-92; that stretch reads YQWEYPYLLSILPSLLGLLSF. Over 93 to 96 the chain is Cytoplasmic; the sequence is PRNN. Residues 97-117 traverse the membrane as a helical segment; the sequence is ISYLVLSMISMGLFSIAPLIY. The Lumenal portion of the chain corresponds to 118-137; that stretch reads GSMEMFPAAQQLYRHGKAYR. Residues 138–158 traverse the membrane as a helical segment; sequence FLFGFSAVSIMYLVLVLAVQV. Residues 159 to 183 are Cytoplasmic-facing; that stretch reads HAWQLYYSKKLLDSWFTSTQEKKHK.

The protein belongs to the jagunal family. Interacts with COPA, COPB2 and COPG2. In terms of tissue distribution, ubiquitously expressed.

The protein localises to the endoplasmic reticulum membrane. In terms of biological role, endoplasmic reticulum transmembrane protein involved in vesicle-mediated transport, which is required for neutrophil function. Required for vesicle-mediated transport; it is however unclear whether it is involved in early secretory pathway or intracellular protein transport. Acts as a regulator of neutrophil function, probably via its role in vesicle-mediated transport: required for defense against fungal pathogens and for granulocyte colony-stimulating factor (GM-CSF) signaling pathway; possibly by regulating glycosylation and/or targeting of proteins contributing to the viability and migration of neutrophils. This is Protein jagunal homolog 1 from Homo sapiens (Human).